Reading from the N-terminus, the 160-residue chain is Probable chemoreceptor glutamine deamidase CheD (160 aa).

The protein belongs to the CheD family.

It carries out the reaction L-glutaminyl-[protein] + H2O = L-glutamyl-[protein] + NH4(+). Functionally, probably deamidates glutamine residues to glutamate on methyl-accepting chemotaxis receptors (MCPs), playing an important role in chemotaxis. This Desulfitobacterium hafniense (strain DSM 10664 / DCB-2) protein is Probable chemoreceptor glutamine deamidase CheD.